The sequence spans 205 residues: Small ribosomal subunit protein uS4 (205 aa).

Positions 18–46 (NIWGRSKSPVNRREYGPGQHGQRRKGKLS) are disordered. In terms of domain architecture, S4 RNA-binding spans 94–157 (RRLDAVVYRA…RQMTLVLEAQ (64 aa)).

The protein belongs to the universal ribosomal protein uS4 family. As to quaternary structure, part of the 30S ribosomal subunit. Contacts protein S5. The interaction surface between S4 and S5 is involved in control of translational fidelity.

Functionally, one of the primary rRNA binding proteins, it binds directly to 16S rRNA where it nucleates assembly of the body of the 30S subunit. With S5 and S12 plays an important role in translational accuracy. In Xanthobacter autotrophicus (strain ATCC BAA-1158 / Py2), this protein is Small ribosomal subunit protein uS4.